The following is a 366-amino-acid chain: Carbamoyl phosphate synthase small chain (366 aa).

Positions 1–174 are CPSase; that stretch reads MQEIPAILVL…GERYTVDNPD (174 aa). Positions 48, 226, and 228 each coordinate L-glutamine. The region spanning 178 to 366 is the Glutamine amidotransferase type-1 domain; the sequence is HVVAFDYGIK…FTELMERLKN (189 aa). Catalysis depends on cysteine 256, which acts as the Nucleophile. Residues leucine 257, glutamine 260, asparagine 298, glycine 300, and phenylalanine 301 each coordinate L-glutamine. Residues histidine 340 and glutamate 342 contribute to the active site.

It belongs to the CarA family. Composed of two chains; the small (or glutamine) chain promotes the hydrolysis of glutamine to ammonia, which is used by the large (or ammonia) chain to synthesize carbamoyl phosphate. Tetramer of heterodimers (alpha,beta)4.

The enzyme catalyses hydrogencarbonate + L-glutamine + 2 ATP + H2O = carbamoyl phosphate + L-glutamate + 2 ADP + phosphate + 2 H(+). The catalysed reaction is L-glutamine + H2O = L-glutamate + NH4(+). It functions in the pathway amino-acid biosynthesis; L-arginine biosynthesis; carbamoyl phosphate from bicarbonate: step 1/1. Its pathway is pyrimidine metabolism; UMP biosynthesis via de novo pathway; (S)-dihydroorotate from bicarbonate: step 1/3. Its function is as follows. Small subunit of the glutamine-dependent carbamoyl phosphate synthetase (CPSase). CPSase catalyzes the formation of carbamoyl phosphate from the ammonia moiety of glutamine, carbonate, and phosphate donated by ATP, constituting the first step of 2 biosynthetic pathways, one leading to arginine and/or urea and the other to pyrimidine nucleotides. The small subunit (glutamine amidotransferase) binds and cleaves glutamine to supply the large subunit with the substrate ammonia. This Chlorobaculum tepidum (strain ATCC 49652 / DSM 12025 / NBRC 103806 / TLS) (Chlorobium tepidum) protein is Carbamoyl phosphate synthase small chain.